A 25-amino-acid polypeptide reads, in one-letter code: Caerin-1.18 (25 aa).

Position 25 is a leucine amide (leucine 25).

In terms of tissue distribution, expressed by the skin dorsal glands.

The protein localises to the secreted. Its function is as follows. Shows significant activity against Gram-positive organisms, but is less effective against Gram-negative organisms. This chain is Caerin-1.18, found in Ranoidea gracilenta (Dainty green tree frog).